A 515-amino-acid chain; its full sequence is Galactose/methyl galactoside import ATP-binding protein MglA (515 aa).

ABC transporter domains follow at residues 8 to 243 (LEMR…VGRE) and 254 to 499 (IPKE…AKYL). An ATP-binding site is contributed by 40–47 (GENGAGKS).

It belongs to the ABC transporter superfamily. Galactose/methyl galactoside importer (TC 3.A.1.2.3) family. In terms of assembly, the complex is composed of one ATP-binding protein (MglA), two transmembrane proteins (MglC) and a solute-binding protein (MglB).

The protein resides in the cell membrane. It carries out the reaction D-galactose(out) + ATP + H2O = D-galactose(in) + ADP + phosphate + H(+). It catalyses the reaction methyl beta-D-galactoside(out) + ATP + H2O = methyl beta-D-galactoside(in) + ADP + phosphate + H(+). Part of the ABC transporter complex MglABC involved in galactose/methyl galactoside import. Responsible for energy coupling to the transport system. The polypeptide is Galactose/methyl galactoside import ATP-binding protein MglA (Clostridium perfringens (strain 13 / Type A)).